A 153-amino-acid chain; its full sequence is S-ribosylhomocysteine lyase (153 aa).

Residues His57, His61, and Cys124 each contribute to the Fe cation site.

The protein belongs to the LuxS family. Homodimer. Fe cation is required as a cofactor.

The catalysed reaction is S-(5-deoxy-D-ribos-5-yl)-L-homocysteine = (S)-4,5-dihydroxypentane-2,3-dione + L-homocysteine. Involved in the synthesis of autoinducer 2 (AI-2) which is secreted by bacteria and is used to communicate both the cell density and the metabolic potential of the environment. The regulation of gene expression in response to changes in cell density is called quorum sensing. Catalyzes the transformation of S-ribosylhomocysteine (RHC) to homocysteine (HC) and 4,5-dihydroxy-2,3-pentadione (DPD). This Oceanobacillus iheyensis (strain DSM 14371 / CIP 107618 / JCM 11309 / KCTC 3954 / HTE831) protein is S-ribosylhomocysteine lyase.